Consider the following 328-residue polypeptide: Tetraacyldisaccharide 4'-kinase (328 aa).

Residue 55–62 (TVGGNGKT) participates in ATP binding.

Belongs to the LpxK family.

It carries out the reaction a lipid A disaccharide + ATP = a lipid IVA + ADP + H(+). It functions in the pathway glycolipid biosynthesis; lipid IV(A) biosynthesis; lipid IV(A) from (3R)-3-hydroxytetradecanoyl-[acyl-carrier-protein] and UDP-N-acetyl-alpha-D-glucosamine: step 6/6. In terms of biological role, transfers the gamma-phosphate of ATP to the 4'-position of a tetraacyldisaccharide 1-phosphate intermediate (termed DS-1-P) to form tetraacyldisaccharide 1,4'-bis-phosphate (lipid IVA). This Hamiltonella defensa subsp. Acyrthosiphon pisum (strain 5AT) protein is Tetraacyldisaccharide 4'-kinase.